A 254-amino-acid polypeptide reads, in one-letter code: 5'-nucleotidase SurE (254 aa).

Residues Asp8, Asp9, Ser40, and Asn93 each contribute to the a divalent metal cation site.

Belongs to the SurE nucleotidase family. A divalent metal cation serves as cofactor.

Its subcellular location is the cytoplasm. It catalyses the reaction a ribonucleoside 5'-phosphate + H2O = a ribonucleoside + phosphate. In terms of biological role, nucleotidase that shows phosphatase activity on nucleoside 5'-monophosphates. The chain is 5'-nucleotidase SurE from Methylorubrum extorquens (strain CM4 / NCIMB 13688) (Methylobacterium extorquens).